The sequence spans 189 residues: Adenylate kinase (189 aa).

Position 10 to 15 (10 to 15) interacts with ATP; it reads GAGKGT. Residues 30–59 are NMP; the sequence is STGDIFRANVSGGTELGKKAQAYMDRGDLV. Residues T31, R36, 57–59, 85–88, and Q92 each bind AMP; these read DLV and GFPR. The segment at 126–136 is LID; sequence ERARIDNRSDD. ATP is bound at residue R127. Residues R133 and R144 each contribute to the AMP site. G172 is a binding site for ATP.

It belongs to the adenylate kinase family. Monomer.

The protein resides in the cytoplasm. The enzyme catalyses AMP + ATP = 2 ADP. The protein operates within purine metabolism; AMP biosynthesis via salvage pathway; AMP from ADP: step 1/1. Its function is as follows. Catalyzes the reversible transfer of the terminal phosphate group between ATP and AMP. Plays an important role in cellular energy homeostasis and in adenine nucleotide metabolism. The polypeptide is Adenylate kinase (Thermobifida fusca (strain YX)).